The sequence spans 1438 residues: DNA polymerase III PolC-type (1438 aa).

The region spanning 422 to 578 (YVVFDVETTG…YDTEATAYIF (157 aa)) is the Exonuclease domain.

The protein belongs to the DNA polymerase type-C family. PolC subfamily.

It is found in the cytoplasm. It carries out the reaction DNA(n) + a 2'-deoxyribonucleoside 5'-triphosphate = DNA(n+1) + diphosphate. Functionally, required for replicative DNA synthesis. This DNA polymerase also exhibits 3' to 5' exonuclease activity. The protein is DNA polymerase III PolC-type of Staphylococcus aureus (strain bovine RF122 / ET3-1).